A 79-amino-acid polypeptide reads, in one-letter code: Sec-independent protein translocase protein TatA (79 aa).

A helical transmembrane segment spans residues 1-21 (MGGLQPWHWVIVIAVFVLLFG). The segment covering 43–52 (IKEMQSEGKS) has biased composition (basic and acidic residues). Positions 43 to 79 (IKEMQSEGKSDNPPATPITSERVDTNPTAEQPDKRSA) are disordered.

It belongs to the TatA/E family. The Tat system comprises two distinct complexes: a TatABC complex, containing multiple copies of TatA, TatB and TatC subunits, and a separate TatA complex, containing only TatA subunits. Substrates initially bind to the TatABC complex, which probably triggers association of the separate TatA complex to form the active translocon.

It localises to the cell membrane. Part of the twin-arginine translocation (Tat) system that transports large folded proteins containing a characteristic twin-arginine motif in their signal peptide across membranes. TatA could form the protein-conducting channel of the Tat system. In Mycobacterium sp. (strain JLS), this protein is Sec-independent protein translocase protein TatA.